Consider the following 477-residue polypeptide: Argininosuccinate lyase (477 aa).

Belongs to the lyase 1 family. Argininosuccinate lyase subfamily.

It is found in the cytoplasm. It carries out the reaction 2-(N(omega)-L-arginino)succinate = fumarate + L-arginine. It participates in amino-acid biosynthesis; L-arginine biosynthesis; L-arginine from L-ornithine and carbamoyl phosphate: step 3/3. The protein is Argininosuccinate lyase of Streptomyces avermitilis (strain ATCC 31267 / DSM 46492 / JCM 5070 / NBRC 14893 / NCIMB 12804 / NRRL 8165 / MA-4680).